A 541-amino-acid polypeptide reads, in one-letter code: Arginine--tRNA ligase (541 aa).

Residues 119-129 (ANPTGPLHIGH) carry the 'HIGH' region motif.

It belongs to the class-I aminoacyl-tRNA synthetase family. In terms of assembly, monomer.

It localises to the cytoplasm. It carries out the reaction tRNA(Arg) + L-arginine + ATP = L-arginyl-tRNA(Arg) + AMP + diphosphate. This chain is Arginine--tRNA ligase, found in Helicobacter pylori (strain G27).